Reading from the N-terminus, the 842-residue chain is Pentatricopeptide repeat-containing protein At3g23020 (842 aa).

The tract at residues Tyr40–Gly61 is disordered. Residues His45 to Asp59 show a composition bias toward basic and acidic residues. 18 PPR repeats span residues Asn186–Pro220, Ile221–Pro255, Asp256–Ala290, Ser297–Pro331, Thr332–His362, Asp366–Pro400, Asp401–Ile435, Asp436–Ser470, Tyr474–Val500, Thr504–Pro538, Asp539–Ser573, Asp574–Pro608, Asp609–Gly643, Asn644–Ser674, Asp682–Arg712, Asn716–Thr750, Asp751–Pro785, and Asp786–Arg820.

Belongs to the PPR family. P subfamily.

This chain is Pentatricopeptide repeat-containing protein At3g23020, found in Arabidopsis thaliana (Mouse-ear cress).